The chain runs to 159 residues: 2-C-methyl-D-erythritol 2,4-cyclodiphosphate synthase (159 aa).

2 residues coordinate a divalent metal cation: Asp-8 and His-10. 4-CDP-2-C-methyl-D-erythritol 2-phosphate contacts are provided by residues 8-10 (DVH) and 34-35 (HS). His-42 contacts a divalent metal cation. 4-CDP-2-C-methyl-D-erythritol 2-phosphate is bound by residues 56 to 58 (DIG), 61 to 65 (FPDTD), 100 to 106 (AQAPKMA), 132 to 135 (TTTE), Phe-139, and Arg-142.

It belongs to the IspF family. As to quaternary structure, homotrimer. Requires a divalent metal cation as cofactor.

The enzyme catalyses 4-CDP-2-C-methyl-D-erythritol 2-phosphate = 2-C-methyl-D-erythritol 2,4-cyclic diphosphate + CMP. It functions in the pathway isoprenoid biosynthesis; isopentenyl diphosphate biosynthesis via DXP pathway; isopentenyl diphosphate from 1-deoxy-D-xylulose 5-phosphate: step 4/6. Involved in the biosynthesis of isopentenyl diphosphate (IPP) and dimethylallyl diphosphate (DMAPP), two major building blocks of isoprenoid compounds. Catalyzes the conversion of 4-diphosphocytidyl-2-C-methyl-D-erythritol 2-phosphate (CDP-ME2P) to 2-C-methyl-D-erythritol 2,4-cyclodiphosphate (ME-CPP) with a corresponding release of cytidine 5-monophosphate (CMP). The chain is 2-C-methyl-D-erythritol 2,4-cyclodiphosphate synthase from Cronobacter sakazakii (strain ATCC BAA-894) (Enterobacter sakazakii).